A 248-amino-acid polypeptide reads, in one-letter code: Probable uridine-cytidine kinase (248 aa).

15-23 is a binding site for ATP; the sequence is GGTSCGKST. The substrate site is built by Asp-73, Tyr-101, Arg-154, Arg-164, and Gln-172. Asp-201 serves as a coordination point for ATP. The segment at 224 to 248 is disordered; it reads SDEEEEKENELVKQGSFRRPFSRPH.

The protein belongs to the uridine kinase family.

The enzyme catalyses uridine + ATP = UMP + ADP + H(+). It catalyses the reaction cytidine + ATP = CMP + ADP + H(+). It functions in the pathway pyrimidine metabolism; CTP biosynthesis via salvage pathway; CTP from cytidine: step 1/3. The protein operates within pyrimidine metabolism; UMP biosynthesis via salvage pathway; UMP from uridine: step 1/1. This Caenorhabditis elegans protein is Probable uridine-cytidine kinase.